The primary structure comprises 545 residues: Purple acid phosphatase 13 (545 aa).

The first 25 residues, methionine 1–glycine 25, serve as a signal peptide directing secretion. N-linked (GlcNAc...) asparagine glycans are attached at residues asparagine 125 and asparagine 145. Aspartate 203 is a Fe cation binding site. N-linked (GlcNAc...) asparagine glycosylation occurs at asparagine 209. Tyrosine 233 lines the Fe cation pocket. 6 N-linked (GlcNAc...) asparagine glycosylation sites follow: asparagine 240, asparagine 254, asparagine 306, asparagine 321, asparagine 351, and asparagine 367. Histidine 389 acts as the Proton donor in catalysis. Residue histidine 416 participates in Zn(2+) binding. Residue histidine 416–aspartate 418 participates in substrate binding. N-linked (GlcNAc...) asparagine glycosylation is found at asparagine 428, asparagine 466, asparagine 475, and asparagine 510.

It belongs to the metallophosphoesterase superfamily. Purple acid phosphatase family. As to quaternary structure, homodimer. Fe cation serves as cofactor. It depends on Zn(2+) as a cofactor. As to expression, expressed in stems, leaves, flowers and siliques.

It localises to the secreted. The catalysed reaction is a phosphate monoester + H2O = an alcohol + phosphate. The protein is Purple acid phosphatase 13 (PAP13) of Arabidopsis thaliana (Mouse-ear cress).